The sequence spans 744 residues: Eukaryotic translation initiation factor 3 subunit B (744 aa).

The interval 1–21 is disordered; it reads MAPSFDHLPDPEEDEYDEEEL. The span at 11-21 shows a compositional bias: acidic residues; it reads PEEDEYDEEEL. The region spanning 40–126 is the RRM domain; the sequence is TFVVIDGLPE…HTLRVNKLTD (87 aa). WD repeat units lie at residues 193–232, 234–290, 307–348, and 577–622; these read DRQH…RQKR, AHPF…PLRS, PIKR…LLDK, and ADHY…LREE.

The protein belongs to the eIF-3 subunit B family. In terms of assembly, component of the eukaryotic translation initiation factor 3 (eIF-3) complex.

The protein resides in the cytoplasm. Its function is as follows. RNA-binding component of the eukaryotic translation initiation factor 3 (eIF-3) complex, which is involved in protein synthesis of a specialized repertoire of mRNAs and, together with other initiation factors, stimulates binding of mRNA and methionyl-tRNAi to the 40S ribosome. The eIF-3 complex specifically targets and initiates translation of a subset of mRNAs involved in cell proliferation. The protein is Eukaryotic translation initiation factor 3 subunit B (prt1) of Botryotinia fuckeliana (strain B05.10) (Noble rot fungus).